We begin with the raw amino-acid sequence, 148 residues long: UPF0756 membrane protein KPK_3307 (148 aa).

Helical transmembrane passes span 14–34, 51–71, 86–106, and 121–141; these read ALGF…LIIV, LTVG…SGTL, LLAI…VSLM, and VLGV…AGII.

It belongs to the UPF0756 family.

It is found in the cell membrane. The polypeptide is UPF0756 membrane protein KPK_3307 (Klebsiella pneumoniae (strain 342)).